We begin with the raw amino-acid sequence, 206 residues long: Small ribosomal subunit protein uS4 (206 aa).

The segment at 29-52 is disordered; it reads LDKRPYAPGQHGQRRGRGRPSDYS. Positions 96 to 171 constitute an S4 RNA-binding domain; sequence RRLDNVVFRM…QKRRRVSPWV (76 aa).

The protein belongs to the universal ribosomal protein uS4 family. Part of the 30S ribosomal subunit. Contacts protein S5. The interaction surface between S4 and S5 is involved in control of translational fidelity.

In terms of biological role, one of the primary rRNA binding proteins, it binds directly to 16S rRNA where it nucleates assembly of the body of the 30S subunit. Its function is as follows. With S5 and S12 plays an important role in translational accuracy. In Deinococcus deserti (strain DSM 17065 / CIP 109153 / LMG 22923 / VCD115), this protein is Small ribosomal subunit protein uS4.